We begin with the raw amino-acid sequence, 693 residues long: Polyribonucleotide nucleotidyltransferase (693 aa).

Positions 489 and 495 each coordinate Mg(2+). A KH domain is found at 556-615 (PQIHVMNINPAKIKDVVGRGGATVKGIVEKTGAQIDTSDSGEVKVFAKDKKSMDMAVAMI). Residues 625 to 693 (GQVYKGKIVK…GRVKLSLVAR (69 aa)) enclose the S1 motif domain.

It belongs to the polyribonucleotide nucleotidyltransferase family. As to quaternary structure, component of the RNA degradosome, which is a multiprotein complex involved in RNA processing and mRNA degradation. It depends on Mg(2+) as a cofactor.

Its subcellular location is the cytoplasm. The enzyme catalyses RNA(n+1) + phosphate = RNA(n) + a ribonucleoside 5'-diphosphate. Involved in mRNA degradation. Catalyzes the phosphorolysis of single-stranded polyribonucleotides processively in the 3'- to 5'-direction. This chain is Polyribonucleotide nucleotidyltransferase, found in Francisella tularensis subsp. mediasiatica (strain FSC147).